The chain runs to 30 residues: Hainantoxin F7-28.42 (30 aa).

In terms of tissue distribution, expressed by the venom gland.

The protein resides in the secreted. In Cyriopagopus hainanus (Chinese bird spider), this protein is Hainantoxin F7-28.42.